Here is a 79-residue protein sequence, read N- to C-terminus: UPF0349 protein BCE33L4669 (79 aa).

The protein belongs to the UPF0349 family.

This is UPF0349 protein BCE33L4669 from Bacillus cereus (strain ZK / E33L).